Consider the following 501-residue polypeptide: Probable cytosol aminopeptidase (501 aa).

Positions 267 and 272 each coordinate Mn(2+). Lys-279 is an active-site residue. Positions 290, 349, and 351 each coordinate Mn(2+). The active site involves Arg-353.

This sequence belongs to the peptidase M17 family. It depends on Mn(2+) as a cofactor.

It is found in the cytoplasm. The enzyme catalyses Release of an N-terminal amino acid, Xaa-|-Yaa-, in which Xaa is preferably Leu, but may be other amino acids including Pro although not Arg or Lys, and Yaa may be Pro. Amino acid amides and methyl esters are also readily hydrolyzed, but rates on arylamides are exceedingly low.. The catalysed reaction is Release of an N-terminal amino acid, preferentially leucine, but not glutamic or aspartic acids.. In terms of biological role, presumably involved in the processing and regular turnover of intracellular proteins. Catalyzes the removal of unsubstituted N-terminal amino acids from various peptides. This is Probable cytosol aminopeptidase from Desulfovibrio desulfuricans (strain ATCC 27774 / DSM 6949 / MB).